The primary structure comprises 303 residues: MRAPRRRCYRVRPMHDVSKLEKRLLRAAANAIRDFELIGDGDRIMVAVSGGKDSYTLLHVLMRLRERAPIDFDLVAVNLDQGQPGYPAEIVERHFQAVGVPHRMLYADTYSIVRRLVPEGKTTCPVCSRLRRGVLYNAAAEMGCTKIALGHHRDDLVETLLLSALYSGALKSMPPKLRSDDGRNVVVRPLCYAAEEDIAAFATAMRFPIVPCDLCGSQPNLRRKRVKALLAELSDEHPAVKGNLLNALGHVVPSHLLDRDLHRLVASTGRDPWLDGDEDEDGGCLQGEVADALVKLAGAREDA.

Positions 49–54 match the PP-loop motif motif; sequence SGGKDS. Residues cysteine 124, cysteine 127, and cysteine 215 each contribute to the [4Fe-4S] cluster site.

It belongs to the TtcA family. In terms of assembly, homodimer. The cofactor is Mg(2+). [4Fe-4S] cluster serves as cofactor.

The protein resides in the cytoplasm. It catalyses the reaction cytidine(32) in tRNA + S-sulfanyl-L-cysteinyl-[cysteine desulfurase] + AH2 + ATP = 2-thiocytidine(32) in tRNA + L-cysteinyl-[cysteine desulfurase] + A + AMP + diphosphate + H(+). Its pathway is tRNA modification. Catalyzes the ATP-dependent 2-thiolation of cytidine in position 32 of tRNA, to form 2-thiocytidine (s(2)C32). The sulfur atoms are provided by the cysteine/cysteine desulfurase (IscS) system. The polypeptide is tRNA-cytidine(32) 2-sulfurtransferase (Anaeromyxobacter sp. (strain Fw109-5)).